Consider the following 297-residue polypeptide: Formylmethanofuran--tetrahydromethanopterin formyltransferase (297 aa).

This sequence belongs to the FTR family. In terms of assembly, homotetramer.

Its subcellular location is the cytoplasm. It carries out the reaction N-formylmethanofuran + 5,6,7,8-tetrahydromethanopterin + H(+) = N(5)-formyl-5,6,7,8-tetrahydromethanopterin + methanofuran. It functions in the pathway one-carbon metabolism; methanogenesis from CO(2); 5,10-methenyl-5,6,7,8-tetrahydromethanopterin from CO(2): step 2/3. Its function is as follows. Catalyzes the reversible transfer of a formyl group from formylmethanofuran (formyl-MFR) to tetrahydromethanopterin (H(4)MPT) to produce 5-formyl tetrahydromethanopterin (5-formyl-H(4)MPT) and methanofuran (MFR). This chain is Formylmethanofuran--tetrahydromethanopterin formyltransferase, found in Methanococcoides burtonii (strain DSM 6242 / NBRC 107633 / OCM 468 / ACE-M).